The chain runs to 198 residues: Small ribosomal subunit protein eS1 (198 aa).

The protein belongs to the eukaryotic ribosomal protein eS1 family.

In Methanospirillum hungatei JF-1 (strain ATCC 27890 / DSM 864 / NBRC 100397 / JF-1), this protein is Small ribosomal subunit protein eS1.